Reading from the N-terminus, the 182-residue chain is UPF0397 protein BT9727_2423 (182 aa).

5 consecutive transmembrane segments (helical) span residues 9 to 29 (VVAI…GFSI), 40 to 60 (AILT…IGLI), 71 to 91 (WGIW…MGFI), 114 to 134 (ITGL…DIIV), and 142 to 162 (IVIQ…VLGL).

It belongs to the UPF0397 family.

It localises to the cell membrane. The protein is UPF0397 protein BT9727_2423 of Bacillus thuringiensis subsp. konkukian (strain 97-27).